The chain runs to 309 residues: 2-dehydro-3-deoxygluconokinase (309 aa).

Residues 34 to 38 (GAEVN), Tyr-89, 103 to 105 (YYR), and Arg-167 each bind substrate. Residues 165-167 (NYR), Ser-193, 219-225 (KRGAKGA), 248-251 (GAGD), and Asn-275 contribute to the ATP site. Asp-251 contacts substrate. The Proton acceptor role is filled by Asp-251. Substrate is bound at residue Asp-287.

This sequence belongs to the carbohydrate kinase pfkB family. As to quaternary structure, homohexamer; trimer of dimers.

The enzyme catalyses 2-dehydro-3-deoxy-D-gluconate + ATP = 2-dehydro-3-deoxy-6-phospho-D-gluconate + ADP + H(+). It functions in the pathway carbohydrate acid metabolism; 2-dehydro-3-deoxy-D-gluconate degradation; D-glyceraldehyde 3-phosphate and pyruvate from 2-dehydro-3-deoxy-D-gluconate: step 1/2. Its function is as follows. Involved in the degradation of glucose via the semi-phosphorylative Entner-Doudoroff pathway. Catalyzes the phosphorylation of 2-keto-3-deoxygluconate (KDG) to produce 2-keto-3-deoxy-6-phosphogluconate (KDPG). The polypeptide is 2-dehydro-3-deoxygluconokinase (kdgK) (Thermus thermophilus (strain ATCC 27634 / DSM 579 / HB8)).